A 452-amino-acid polypeptide reads, in one-letter code: NADH-quinone oxidoreductase subunit N 2 (452 aa).

Helical transmembrane passes span Val6–Ile26, Thr33–Gly53, Thr70–Leu90, Ser97–Ala117, Leu120–Phe140, Tyr154–Ala174, Ile194–Phe214, Phe232–Ile252, Ile258–Leu278, Met286–Glu306, Ile311–Ile331, Phe355–Val375, Gly387–Leu407, and Ala432–Phe452.

Belongs to the complex I subunit 2 family. NDH-1 is composed of 14 different subunits. Subunits NuoA, H, J, K, L, M, N constitute the membrane sector of the complex.

The protein resides in the cell inner membrane. The catalysed reaction is a quinone + NADH + 5 H(+)(in) = a quinol + NAD(+) + 4 H(+)(out). Its function is as follows. NDH-1 shuttles electrons from NADH, via FMN and iron-sulfur (Fe-S) centers, to quinones in the respiratory chain. The immediate electron acceptor for the enzyme in this species is believed to be ubiquinone. Couples the redox reaction to proton translocation (for every two electrons transferred, four hydrogen ions are translocated across the cytoplasmic membrane), and thus conserves the redox energy in a proton gradient. In Thermodesulfovibrio yellowstonii (strain ATCC 51303 / DSM 11347 / YP87), this protein is NADH-quinone oxidoreductase subunit N 2.